We begin with the raw amino-acid sequence, 1161 residues long: PAN2-PAN3 deadenylation complex catalytic subunit pan2 (1161 aa).

WD repeat units follow at residues 20–59, 102–145, and 276–315; these read GLPT…RYTS, AHEE…DKLQ, and ANVS…HFNE. The segment at 316–452 is linker; the sequence is MSKEVEFADV…GAKLNGEAED (137 aa). A USP domain is found at 453–822; it reads DPLLKYSNVE…IPCVLAYQAR (370 aa). The region spanning 871–1049 is the Exonuclease domain; the sequence is VALDTEFVDL…VEDARMALRL (179 aa). Residues D874, E876, D983, and D1042 each coordinate a divalent metal cation. Positions 1094-1161 are disordered; it reads GTAVTMQNNS…GDFFGGSPLK (68 aa). Polar residues predominate over residues 1097–1110; it reads VTMQNNSGRNTPST. Residues 1116 to 1129 show a composition bias toward low complexity; it reads AAAAAATTSAPATP. A compositionally biased stretch (gly residues) spans 1145–1155; it reads TFGGPGTGDFF.

This sequence belongs to the peptidase C19 family. PAN2 subfamily. Forms a heterotrimer with an asymmetric homodimer of the regulatory subunit pan3 to form the poly(A)-nuclease (PAN) deadenylation complex. It depends on a divalent metal cation as a cofactor.

Its subcellular location is the cytoplasm. It carries out the reaction Exonucleolytic cleavage of poly(A) to 5'-AMP.. Its activity is regulated as follows. Positively regulated by the regulatory subunit pan3. Catalytic subunit of the poly(A)-nuclease (PAN) deadenylation complex, one of two cytoplasmic mRNA deadenylases involved in mRNA turnover. PAN specifically shortens poly(A) tails of RNA and the activity is stimulated by poly(A)-binding protein pab1. PAN deadenylation is followed by rapid degradation of the shortened mRNA tails by the CCR4-NOT complex. Deadenylated mRNAs are then degraded by two alternative mechanisms, namely exosome-mediated 3'-5' exonucleolytic degradation, or deadenylation-dependent mRNA decaping and subsequent 5'-3' exonucleolytic degradation by xrn1. May also be involved in post-transcriptional maturation of mRNA poly(A) tails. The sequence is that of PAN2-PAN3 deadenylation complex catalytic subunit pan2 from Aspergillus clavatus (strain ATCC 1007 / CBS 513.65 / DSM 816 / NCTC 3887 / NRRL 1 / QM 1276 / 107).